A 194-amino-acid chain; its full sequence is Thymidine kinase (194 aa).

Residues 9–16 and 85–88 contribute to the ATP site; these read GAMNSGKT and DECQ. Catalysis depends on glutamate 86, which acts as the Proton acceptor. Zn(2+)-binding residues include cysteine 143, cysteine 146, cysteine 180, and histidine 183.

It belongs to the thymidine kinase family. Homotetramer.

It localises to the cytoplasm. The catalysed reaction is thymidine + ATP = dTMP + ADP + H(+). The polypeptide is Thymidine kinase (Enterococcus faecalis (strain ATCC 700802 / V583)).